A 284-amino-acid polypeptide reads, in one-letter code: Pseudopaline exporter CntI (284 aa).

A run of 10 helical transmembrane segments spans residues 2–22 (VLDLLKSGVLLAVLASFTFSV), 34–54 (LPAAEIVFFRSAIGTLLIYLL), 74–94 (GVMGALYLVCYFYAIAHIPLA), 96–116 (ASILAHMSPFFVILFSALFLG), 122–142 (AVYWLLLVVVLGALMIVKPFS), 147–167 (SVYAVVGLLSAVFAAGASVAI), 179–199 (IVFYFLAVATLVAIPLMWNDF), 209–229 (GLLLAIGVVSLLGQVFLTRAF), 236–256 (IVAVTRYIGIVFNAGWGWLFW), and 259–279 (VPDALTIAGGVLIVVACIALS). 2 consecutive EamA domains span residues 8–138 (SGVL…LMIV) and 151–279 (VVGL…IALS).

It belongs to the EamA transporter family.

Its subcellular location is the cell inner membrane. Functionally, transports the metallophore pseudopaline, which is involved in the acquisition of nickel and zinc, and thus enables bacterial growth inside the host, where metal access is limited. Is probably involved in the export of pseudopaline. Essential for iron acquisition during the interaction with airway mucus secretions (AMS). The protein is Pseudopaline exporter CntI of Pseudomonas aeruginosa (strain ATCC 15692 / DSM 22644 / CIP 104116 / JCM 14847 / LMG 12228 / 1C / PRS 101 / PAO1).